Reading from the N-terminus, the 284-residue chain is Urease accessory protein UreD (284 aa).

A disordered region spans residues 1–28; it reads MQSEQQAIGASGCEDAQQPVRQQRARGR.

This sequence belongs to the UreD family. As to quaternary structure, ureD, UreF and UreG form a complex that acts as a GTP-hydrolysis-dependent molecular chaperone, activating the urease apoprotein by helping to assemble the nickel containing metallocenter of UreC. The UreE protein probably delivers the nickel.

The protein localises to the cytoplasm. Its function is as follows. Required for maturation of urease via the functional incorporation of the urease nickel metallocenter. The protein is Urease accessory protein UreD of Agrobacterium fabrum (strain C58 / ATCC 33970) (Agrobacterium tumefaciens (strain C58)).